Reading from the N-terminus, the 125-residue chain is Histone H2A.v3 (125 aa).

This sequence belongs to the histone H2A family. As to quaternary structure, the nucleosome is a histone octamer containing two molecules each of H2A, H2B, H3 and H4 assembled in one H3-H4 heterotetramer and two H2A-H2B heterodimers. The octamer wraps approximately 147 bp of DNA.

It is found in the nucleus. It localises to the chromosome. Functionally, core component of nucleosome which plays a central role in DNA double strand break (DSB) repair. Nucleosomes wrap and compact DNA into chromatin, limiting DNA accessibility to the cellular machineries which require DNA as a template. Histones thereby play a central role in transcription regulation, DNA repair, DNA replication and chromosomal stability. DNA accessibility is regulated via a complex set of post-translational modifications of histones, also called histone code, and nucleosome remodeling. The polypeptide is Histone H2A.v3 (H2Av3) (Dictyostelium discoideum (Social amoeba)).